The following is a 317-amino-acid chain: Lipoyl synthase (317 aa).

The segment at 1–22 (MVTVVNTLNRPRHPEKQNRPET) is disordered. Basic and acidic residues predominate over residues 12-22 (RHPEKQNRPET). [4Fe-4S] cluster-binding residues include cysteine 57, cysteine 62, cysteine 68, cysteine 83, cysteine 87, cysteine 90, and serine 296. Positions 69-285 (WEKKHATFMI…ETVAYAKGFL (217 aa)) constitute a Radical SAM core domain.

The protein belongs to the radical SAM superfamily. Lipoyl synthase family. The cofactor is [4Fe-4S] cluster.

It is found in the cytoplasm. The enzyme catalyses [[Fe-S] cluster scaffold protein carrying a second [4Fe-4S](2+) cluster] + N(6)-octanoyl-L-lysyl-[protein] + 2 oxidized [2Fe-2S]-[ferredoxin] + 2 S-adenosyl-L-methionine + 4 H(+) = [[Fe-S] cluster scaffold protein] + N(6)-[(R)-dihydrolipoyl]-L-lysyl-[protein] + 4 Fe(3+) + 2 hydrogen sulfide + 2 5'-deoxyadenosine + 2 L-methionine + 2 reduced [2Fe-2S]-[ferredoxin]. It functions in the pathway protein modification; protein lipoylation via endogenous pathway; protein N(6)-(lipoyl)lysine from octanoyl-[acyl-carrier-protein]: step 2/2. Its function is as follows. Catalyzes the radical-mediated insertion of two sulfur atoms into the C-6 and C-8 positions of the octanoyl moiety bound to the lipoyl domains of lipoate-dependent enzymes, thereby converting the octanoylated domains into lipoylated derivatives. In Azorhizobium caulinodans (strain ATCC 43989 / DSM 5975 / JCM 20966 / LMG 6465 / NBRC 14845 / NCIMB 13405 / ORS 571), this protein is Lipoyl synthase.